The sequence spans 282 residues: NADPH-dependent 7-cyano-7-deazaguanine reductase (282 aa).

Residue 88 to 90 (IES) coordinates substrate. 90–91 (SK) is a binding site for NADPH. Catalysis depends on Cys190, which acts as the Thioimide intermediate. The Proton donor role is filled by Asp197. Residue 229–230 (HE) coordinates substrate. Residue 258–259 (RG) participates in NADPH binding.

It belongs to the GTP cyclohydrolase I family. QueF type 2 subfamily. As to quaternary structure, homodimer.

It localises to the cytoplasm. The enzyme catalyses 7-aminomethyl-7-carbaguanine + 2 NADP(+) = 7-cyano-7-deazaguanine + 2 NADPH + 3 H(+). It participates in tRNA modification; tRNA-queuosine biosynthesis. In terms of biological role, catalyzes the NADPH-dependent reduction of 7-cyano-7-deazaguanine (preQ0) to 7-aminomethyl-7-deazaguanine (preQ1). This Citrobacter koseri (strain ATCC BAA-895 / CDC 4225-83 / SGSC4696) protein is NADPH-dependent 7-cyano-7-deazaguanine reductase.